Reading from the N-terminus, the 258-residue chain is NAD-capped RNA hydrolase NudC (258 aa).

Substrate is bound at residue R69. Zn(2+) is bound by residues C98 and C101. E111 serves as a coordination point for substrate. Zn(2+) is bound by residues C116 and C119. Y124 serves as a coordination point for substrate. The region spanning 125–248 (PQIAPCIIVA…TVARRLIEDT (124 aa)) is the Nudix hydrolase domain. Residues A158, E174, and E178 each contribute to the a divalent metal cation site. Positions 159-180 (GFVEVGETLEQTVAREVMEESG) match the Nudix box motif. 192-199 (QPWPFPMS) serves as a coordination point for substrate. E219 provides a ligand contact to a divalent metal cation. Substrate is bound at residue A241.

The protein belongs to the Nudix hydrolase family. NudC subfamily. Homodimer. The cofactor is Mg(2+). Mn(2+) serves as cofactor. Zn(2+) is required as a cofactor.

The enzyme catalyses a 5'-end NAD(+)-phospho-ribonucleoside in mRNA + H2O = a 5'-end phospho-adenosine-phospho-ribonucleoside in mRNA + beta-nicotinamide D-ribonucleotide + 2 H(+). The catalysed reaction is NAD(+) + H2O = beta-nicotinamide D-ribonucleotide + AMP + 2 H(+). It carries out the reaction NADH + H2O = reduced beta-nicotinamide D-ribonucleotide + AMP + 2 H(+). Functionally, mRNA decapping enzyme that specifically removes the nicotinamide adenine dinucleotide (NAD) cap from a subset of mRNAs by hydrolyzing the diphosphate linkage to produce nicotinamide mononucleotide (NMN) and 5' monophosphate mRNA. The NAD-cap is present at the 5'-end of some mRNAs and stabilizes RNA against 5'-processing. Has preference for mRNAs with a 5'-end purine. Catalyzes the hydrolysis of a broad range of dinucleotide pyrophosphates. This is NAD-capped RNA hydrolase NudC from Enterobacter sp. (strain 638).